The primary structure comprises 261 residues: Kallikrein-2 (261 aa).

A signal peptide spans 1 to 18 (MWDLVLSIALSVGCTGAV). The propeptide at 19–24 (PLIQSR) is activation peptide. Positions 25–258 (IVGGWECEKH…YRKWIKDTIA (234 aa)) constitute a Peptidase S1 domain. 5 disulfides stabilise this stretch: Cys31–Cys173, Cys50–Cys66, Cys152–Cys219, Cys184–Cys198, and Cys209–Cys234. His65 functions as the Charge relay system in the catalytic mechanism. N-linked (GlcNAc...) asparagine glycosylation is present at Asn102. Asp120 (charge relay system) is an active-site residue. Ser213 functions as the Charge relay system in the catalytic mechanism.

Belongs to the peptidase S1 family. Kallikrein subfamily.

The catalysed reaction is Preferential cleavage of Arg-|-Xaa bonds in small molecule substrates. Highly selective action to release kallidin (lysyl-bradykinin) from kininogen involves hydrolysis of Met-|-Xaa or Leu-|-Xaa.. Glandular kallikreins cleave Met-Lys and Arg-Ser bonds in kininogen to release Lys-bradykinin. In Homo sapiens (Human), this protein is Kallikrein-2 (KLK2).